A 376-amino-acid chain; its full sequence is DNA replication and repair protein RecF (376 aa).

30-37 (GNNAQGKS) serves as a coordination point for ATP.

The protein belongs to the RecF family.

It localises to the cytoplasm. In terms of biological role, the RecF protein is involved in DNA metabolism; it is required for DNA replication and normal SOS inducibility. RecF binds preferentially to single-stranded, linear DNA. It also seems to bind ATP. The sequence is that of DNA replication and repair protein RecF from Nostoc sp. (strain PCC 7120 / SAG 25.82 / UTEX 2576).